A 352-amino-acid polypeptide reads, in one-letter code: S-adenosylmethionine:tRNA ribosyltransferase-isomerase (352 aa).

The protein belongs to the QueA family. As to quaternary structure, monomer.

The protein localises to the cytoplasm. The enzyme catalyses 7-aminomethyl-7-carbaguanosine(34) in tRNA + S-adenosyl-L-methionine = epoxyqueuosine(34) in tRNA + adenine + L-methionine + 2 H(+). The protein operates within tRNA modification; tRNA-queuosine biosynthesis. In terms of biological role, transfers and isomerizes the ribose moiety from AdoMet to the 7-aminomethyl group of 7-deazaguanine (preQ1-tRNA) to give epoxyqueuosine (oQ-tRNA). The polypeptide is S-adenosylmethionine:tRNA ribosyltransferase-isomerase (Paraburkholderia xenovorans (strain LB400)).